The following is a 227-amino-acid chain: Threonine--tRNA ligase (227 aa).

The tract at residues 1–120 (DIELKLSTRP…LIEHYEGAFP (120 aa)) is catalytic.

It belongs to the class-II aminoacyl-tRNA synthetase family. In terms of assembly, homodimer.

The protein localises to the cytoplasm. The catalysed reaction is tRNA(Thr) + L-threonine + ATP = L-threonyl-tRNA(Thr) + AMP + diphosphate + H(+). Functionally, catalyzes the attachment of threonine to tRNA(Thr) in a two-step reaction: L-threonine is first activated by ATP to form Thr-AMP and then transferred to the acceptor end of tRNA(Thr). Also edits incorrectly charged L-seryl-tRNA(Thr). This is Threonine--tRNA ligase from Pseudomonas syringae pv. syringae.